A 462-amino-acid chain; its full sequence is Bifunctional dihydrofolate reductase-thymidylate synthase (462 aa).

The DHFR domain occupies threonine 6–asparagine 165. Substrate is bound at residue valine 10. NADP(+) is bound by residues alanine 12 and glycine 18–arginine 24. Aspartate 32 is a binding site for substrate. Residues arginine 49–threonine 51 and isoleucine 68–asparagine 71 contribute to the NADP(+) site. Residue isoleucine 101 coordinates substrate. Glycine 102–glutamate 109 contributes to the NADP(+) binding site. Threonine 122 serves as a coordination point for substrate. Residues glutamate 180–valine 462 form a thymidylate synthase region. A dUMP-binding site is contributed by arginine 200. Residue cysteine 345 is part of the active site. DUMP contacts are provided by residues histidine 346, glutamine 364–aspartate 368, asparagine 376, and histidine 406–tyrosine 408.

In the N-terminal section; belongs to the dihydrofolate reductase family. The protein in the C-terminal section; belongs to the thymidylate synthase family.

The enzyme catalyses (6S)-5,6,7,8-tetrahydrofolate + NADP(+) = 7,8-dihydrofolate + NADPH + H(+). It catalyses the reaction dUMP + (6R)-5,10-methylene-5,6,7,8-tetrahydrofolate = 7,8-dihydrofolate + dTMP. The protein operates within cofactor biosynthesis; tetrahydrofolate biosynthesis; 5,6,7,8-tetrahydrofolate from 7,8-dihydrofolate: step 1/1. Functionally, bifunctional enzyme. Involved in de novo dTMP biosynthesis. Key enzyme in folate metabolism. Catalyzes an essential reaction for de novo glycine and purine synthesis, DNA precursor synthesis, and for the conversion of dUMP to dTMP. This chain is Bifunctional dihydrofolate reductase-thymidylate synthase, found in Paramecium tetraurelia.